The sequence spans 345 residues: Protoheme IX farnesyltransferase (345 aa).

A run of 9 helical transmembrane segments spans residues 33–53, 54–74, 105–125, 126–146, 154–174, 182–202, 226–246, 247–267, and 315–335; these read VMSL…TPIH, PLLG…SGAL, ATLG…AINW, LAAG…TMWL, IVIG…AATG, LMVL…SLYI, QILL…FTGL, GGWL…TLAV, and ILYL…GLPI.

Belongs to the UbiA prenyltransferase family. Protoheme IX farnesyltransferase subfamily.

The protein localises to the cell inner membrane. It carries out the reaction heme b + (2E,6E)-farnesyl diphosphate + H2O = Fe(II)-heme o + diphosphate. It participates in porphyrin-containing compound metabolism; heme O biosynthesis; heme O from protoheme: step 1/1. Converts heme B (protoheme IX) to heme O by substitution of the vinyl group on carbon 2 of heme B porphyrin ring with a hydroxyethyl farnesyl side group. This Caulobacter sp. (strain K31) protein is Protoheme IX farnesyltransferase.